Reading from the N-terminus, the 541-residue chain is Chloride channel CLIC-like protein 1 (541 aa).

The signal sequence occupies residues 1–18; it reads MLCSLLLCGCLLLITGYA. At 19–184 the chain is on the lumenal side; the sequence is HDDDWIDPTD…EDYFGVDPYN (166 aa). The chain crosses the membrane as a helical span at residues 185-205; sequence VFMVLLCLLCIVALVATELWT. The Cytoplasmic portion of the chain corresponds to 206–217; sequence YVRWHTQLKRVC. Residues 218-238 form a helical membrane-spanning segment; it reads IISFLVSLGWNWIYLYKVAFA. Topologically, residues 239 to 329 are lumenal; it reads QHQANVAKMA…GEFIKALMKE (91 aa). Residues 330–350 form a helical membrane-spanning segment; that stretch reads IPVLLQIPVLVILALAVLGFC. Residues 351–541 lie on the Cytoplasmic side of the membrane; it reads YGAGQSVPML…GTDPVSSPCG (191 aa). Positions 362–381 are disordered; sequence HFRGPEREPPRALEPDDRRR. Over residues 364–381 the composition is skewed to basic and acidic residues; sequence RGPEREPPRALEPDDRRR. Phosphoserine is present on residues serine 434 and serine 438. The residue at position 482 (threonine 482) is a Phosphothreonine. The residue at position 504 (serine 504) is a Phosphoserine. The span at 511–522 shows a compositional bias: basic and acidic residues; that stretch reads QLKTDSECRPHS. The disordered stretch occupies residues 511 to 541; that stretch reads QLKTDSECRPHSTEAAAAAARGTDPVSSPCG.

This sequence belongs to the chloride channel MCLC family. Homomultimers. Interacts with mitochondrial protein PIGBOS1 (via C-terminus); the interaction occurs at the mitochondria-associated endoplasmic reticulum (ER) membrane, a zone of contact between the ER and mitochondrial membranes, but does not appear to play a role in ER-mitochondria tethering and is not affected by ER stress. Interacts with CALR. Expressed in testis (spermatocytes), liver and lung (at protein level). Expressed in spleen, liver, testis, kidney, heart, brain and lung.

The protein resides in the endoplasmic reticulum membrane. The enzyme catalyses chloride(in) = chloride(out). The catalysed reaction is bromide(in) = bromide(out). It catalyses the reaction nitrate(in) = nitrate(out). It carries out the reaction fluoride(in) = fluoride(out). In terms of biological role, anion-selective channel with Ca(2+)-dependent and voltage-independent gating. Permeable to small monovalent anions with selectivity for bromide &gt; chloride &gt; nitrate &gt; fluoride. Operates in the endoplasmic reticulum (ER) membrane where it mediates chloride efflux to compensate for the loss of positive charges from the ER lumen upon Ca(2+) release. Contributes to the maintenance of ER Ca(2+) pools and activation of unfolded protein response to prevent accumulation of misfolded proteins in the ER lumen. Particularly involved in ER homeostasis mechanisms underlying motor neurons and retinal photoreceptors survival. In Rattus norvegicus (Rat), this protein is Chloride channel CLIC-like protein 1.